The chain runs to 393 residues: SEC12-like protein 2 (393 aa).

Position 2 is an N-acetylalanine (Ala-2). At 2–367 (ANQSTETNQP…EQKGDKPGVR (366 aa)) the chain is on the cytoplasmic side. A disordered region spans residues 41–67 (EKSEDDDESSSSSSSSRSCIVLSGGGG). Residue Ser-43 is modified to Phosphoserine. WD repeat units lie at residues 151 to 190 (RDVG…TLLN), 193 to 231 (QAHS…AVAS), 283 to 322 (IKKN…TIQV), and 326 to 367 (AHLG…PGVR). A helical; Signal-anchor for type II membrane protein transmembrane segment spans residues 368-388 (WWLLVLLIVLLYVVAYYYMKA). The Lumenal portion of the chain corresponds to 389–393 (KGIIP).

Interacts with BZIP28.

It is found in the endoplasmic reticulum membrane. Its subcellular location is the golgi apparatus. The protein localises to the cis-Golgi network membrane. In terms of biological role, required for the formation or budding of transport vesicles from the ER. The protein is SEC12-like protein 2 (STL2P) of Arabidopsis thaliana (Mouse-ear cress).